The primary structure comprises 383 residues: Ribosomal RNA large subunit methyltransferase G (383 aa).

This sequence belongs to the methyltransferase superfamily. RlmG family.

It localises to the cytoplasm. The catalysed reaction is guanosine(1835) in 23S rRNA + S-adenosyl-L-methionine = N(2)-methylguanosine(1835) in 23S rRNA + S-adenosyl-L-homocysteine + H(+). Functionally, specifically methylates the guanine in position 1835 (m2G1835) of 23S rRNA. The polypeptide is Ribosomal RNA large subunit methyltransferase G (Shewanella denitrificans (strain OS217 / ATCC BAA-1090 / DSM 15013)).